A 323-amino-acid chain; its full sequence is Dof zinc finger protein DOF3.6 (323 aa).

The Dof-type zinc finger occupies 76 to 130 (LNCPRCDSTNTKFCYFNNYSLTQPRHFCKTCRRYWTRGGSLRNVPVGGGFRRNKR). The Zn(2+) site is built by C78, C81, C103, and C106. Disordered regions lie at residues 121 to 160 (VGGGFRRNKRSKSRSKSTVVVSTDNTTSTSSLTSRPSYSN) and 304 to 323 (GGNSSWTGFTSNNSTGHLSF). The span at 126–135 (RRNKRSKSRS) shows a compositional bias: basic residues. Residues 136–159 (KSTVVVSTDNTTSTSSLTSRPSYS) are compositionally biased toward low complexity.

In terms of assembly, interacts with OBF4. In terms of tissue distribution, predominantly expressed in roots.

The protein resides in the nucleus. Functionally, transcription factor that binds specifically to a 5'-AA[AG]G-3' consensus core sequence. Enhances the DNA binding of OBF transcription factors to OCS elements. This Arabidopsis thaliana (Mouse-ear cress) protein is Dof zinc finger protein DOF3.6 (DOF3.6).